A 513-amino-acid chain; its full sequence is tRNA A64-2'-O-ribosylphosphate transferase (513 aa).

TRNA backbone modifying enzyme that mediates initiator/ elongator tRNA discrimination. This enzyme modifies exclusively the initiator tRNA in position 64 using 5'-phosphoribosyl-1'-pyrophosphate as the modification donor. Recognize the stem-loop IV region that is unique in eukaryotic cytoplasmic initiator tRNAs. The protein is tRNA A64-2'-O-ribosylphosphate transferase (RIT1) of Saccharomyces cerevisiae (strain ATCC 204508 / S288c) (Baker's yeast).